The primary structure comprises 344 residues: uncharacterized protein (344 aa).

The HTH araC/xylS-type domain maps to 242 to 343 (RGITALVRSK…GVAPSEYSRR (102 aa)). 2 consecutive DNA-binding regions (H-T-H motif) follow at residues 263–284 (TDVAGELDMHPRTLRRRLAEEG) and 310–333 (VQQVSTRLGYTEVSTFSHAFKRWY).

This is an uncharacterized protein from Mycobacterium bovis (strain ATCC BAA-935 / AF2122/97).